We begin with the raw amino-acid sequence, 474 residues long: 3-isopropylmalate dehydratase large subunit (474 aa).

The tract at residues 293 to 313 is disordered; that stretch reads GTTPGQGIGITEEIPAPEDLP. [4Fe-4S] cluster contacts are provided by Cys-348, Cys-408, and Cys-411.

This sequence belongs to the aconitase/IPM isomerase family. LeuC type 1 subfamily. As to quaternary structure, heterodimer of LeuC and LeuD. [4Fe-4S] cluster is required as a cofactor.

The enzyme catalyses (2R,3S)-3-isopropylmalate = (2S)-2-isopropylmalate. It participates in amino-acid biosynthesis; L-leucine biosynthesis; L-leucine from 3-methyl-2-oxobutanoate: step 2/4. Functionally, catalyzes the isomerization between 2-isopropylmalate and 3-isopropylmalate, via the formation of 2-isopropylmaleate. This chain is 3-isopropylmalate dehydratase large subunit, found in Natronomonas pharaonis (strain ATCC 35678 / DSM 2160 / CIP 103997 / JCM 8858 / NBRC 14720 / NCIMB 2260 / Gabara) (Halobacterium pharaonis).